Here is a 306-residue protein sequence, read N- to C-terminus: Ribosomal RNA small subunit methyltransferase H (306 aa).

S-adenosyl-L-methionine contacts are provided by residues 33-35 (GGY), D51, F82, D96, and Q103.

It belongs to the methyltransferase superfamily. RsmH family.

The protein localises to the cytoplasm. It carries out the reaction cytidine(1402) in 16S rRNA + S-adenosyl-L-methionine = N(4)-methylcytidine(1402) in 16S rRNA + S-adenosyl-L-homocysteine + H(+). Functionally, specifically methylates the N4 position of cytidine in position 1402 (C1402) of 16S rRNA. The polypeptide is Ribosomal RNA small subunit methyltransferase H (Rickettsia akari (strain Hartford)).